A 224-amino-acid polypeptide reads, in one-letter code: Glutathione peroxidase 3 (224 aa).

The signal sequence occupies residues 1 to 18; it reads MAPGSVLSLAVALATIIG. N-linked (GlcNAc...) asparagine glycosylation occurs at N38. Residue C73 is part of the active site.

This sequence belongs to the glutathione peroxidase family.

The protein localises to the secreted. It localises to the extracellular space. The catalysed reaction is 2 glutathione + H2O2 = glutathione disulfide + 2 H2O. The chain is Glutathione peroxidase 3 (gpx-3) from Caenorhabditis elegans.